A 200-amino-acid polypeptide reads, in one-letter code: NADH-quinone oxidoreductase subunit C (200 aa).

The protein belongs to the complex I 30 kDa subunit family. As to quaternary structure, NDH-1 is composed of 14 different subunits. Subunits NuoB, C, D, E, F, and G constitute the peripheral sector of the complex.

The protein localises to the cell inner membrane. The catalysed reaction is a quinone + NADH + 5 H(+)(in) = a quinol + NAD(+) + 4 H(+)(out). In terms of biological role, NDH-1 shuttles electrons from NADH, via FMN and iron-sulfur (Fe-S) centers, to quinones in the respiratory chain. The immediate electron acceptor for the enzyme in this species is believed to be ubiquinone. Couples the redox reaction to proton translocation (for every two electrons transferred, four hydrogen ions are translocated across the cytoplasmic membrane), and thus conserves the redox energy in a proton gradient. The chain is NADH-quinone oxidoreductase subunit C from Chelativorans sp. (strain BNC1).